Reading from the N-terminus, the 208-residue chain is uncharacterized protein (208 aa).

2 disordered regions span residues 74 to 117 and 181 to 208; these read FEYK…RDSP and ESKL…RKFK. A compositionally biased stretch (polar residues) spans 184-208; the sequence is LGSSEDSGTDRFSSNTSGSSGRKFK.

This is an uncharacterized protein from Mus musculus (Mouse).